We begin with the raw amino-acid sequence, 554 residues long: MLO-like protein 14 (554 aa).

The Extracellular segment spans residues 1–13 (MREETEPSERTLG). The helical transmembrane segment at 14-34 (LTPTWSVATVLTIFVFVSLIV) threads the bilayer. Residues 35–63 (ERSIHRLSNWLQKTKRKPLFAALEKMKEE) lie on the Cytoplasmic side of the membrane. A helical membrane pass occupies residues 64-84 (LMLLGFISLLLTATSSTIANI). Residues 85-158 (CVSSSFHNDR…SYEGMEQLHR (74 aa)) are Extracellular-facing. The chain crosses the membrane as a helical span at residues 159–179 (FIFIMAVTHVTYSCLTMLLAI). The Cytoplasmic segment spans residues 180 to 281 (VKIHRWRIWE…MIRSMEEEFQ (102 aa)). A helical transmembrane segment spans residues 282–302 (KIVGVSGPLWGFVVGFMLFNI). K303 is a topological domain (extracellular). The chain crosses the membrane as a helical span at residues 304–324 (GSNLYFWLAIIPITLVLLVGA). At 325–366 (KLQHVIATLALENASITEYASGIKLRPRDELFWFKKPELLLS) the chain is on the cytoplasmic side. A helical transmembrane segment spans residues 367–387 (LIHFIQFQNAFELASFFWFWW). Residues 388–406 (QFGYNSCFLRNHLLVYLRL) are Extracellular-facing. A helical transmembrane segment spans residues 407–427 (ILGFSGQFLCSYSTLPLYALV). Residues 428–554 (TQMGTNYKAA…SSSLPMRREC (127 aa)) lie on the Cytoplasmic side of the membrane. The interval 441–462 (QRVRETINGWGKATRRKRRHGL) is calmodulin-binding.

This sequence belongs to the MLO family.

Its subcellular location is the membrane. Its function is as follows. May be involved in modulation of pathogen defense and leaf cell death. Activity seems to be regulated by Ca(2+)-dependent calmodulin binding and seems not to require heterotrimeric G proteins. This chain is MLO-like protein 14 (MLO14), found in Arabidopsis thaliana (Mouse-ear cress).